We begin with the raw amino-acid sequence, 23 residues long: Cysteine proteinase (23 aa).

Residues 1–10 (ADSLDWREKG) show a composition bias toward basic and acidic residues. The interval 1 to 23 (ADSLDWREKGVVNSIKDQAQXGS) is disordered.

The protein belongs to the peptidase C1 family.

The chain is Cysteine proteinase from Tritrichomonas foetus (Trichomonas foetus).